The primary structure comprises 224 residues: Small ribosomal subunit protein uS3 (224 aa).

Positions 39 to 107 (VRKYIQNALA…PVHINIEEIR (69 aa)) constitute a KH type-2 domain.

The protein belongs to the universal ribosomal protein uS3 family. Part of the 30S ribosomal subunit. Forms a tight complex with proteins S10 and S14.

Binds the lower part of the 30S subunit head. Binds mRNA in the 70S ribosome, positioning it for translation. This chain is Small ribosomal subunit protein uS3, found in Saccharophagus degradans (strain 2-40 / ATCC 43961 / DSM 17024).